We begin with the raw amino-acid sequence, 71 residues long: Small ribosomal subunit protein eS31 (71 aa).

The Zn(2+) site is built by Cys35, Cys38, Cys53, and Cys56. A C4-type zinc finger spans residues 35–56; the sequence is CPKCGAGVFMAEHLNRYACGKC.

Belongs to the eukaryotic ribosomal protein eS31 family. In terms of assembly, part of the 30S ribosomal subunit. The cofactor is Zn(2+).

The protein is Small ribosomal subunit protein eS31 of Methanococcus vannielii (strain ATCC 35089 / DSM 1224 / JCM 13029 / OCM 148 / SB).